A 133-amino-acid polypeptide reads, in one-letter code: Classical arabinogalactan protein 5 (133 aa).

An N-terminal signal peptide occupies residues 1–21 (MASKSVVVFLFLALVASSVVA). Pyrrolidone carboxylic acid is present on Q22. Positions 23 to 110 (APGPAPTISP…QSPLSGSPNA (88 aa)) are disordered. A compositionally biased stretch (pro residues) spans 25–37 (GPAPTISPLPATP). The segment covering 38 to 48 (TPSQSPRATAP) has biased composition (low complexity). A compositionally biased stretch (pro residues) spans 49-81 (APSPSANPPPSAPTTAPPVSQPPTESPPAPPTS). N109 carries the GPI-anchor amidated asparagine lipid modification. Positions 110-133 (AAAVSRVSLVGTFAGVAVIAALLL) are cleaved as a propeptide — removed in mature form.

It belongs to the classical AGP family. O-glycosylated on the hydroxyproline residues. As to expression, expressed at a low level in flowers and siliques.

The protein localises to the cell membrane. In terms of biological role, proteoglycan that seems to be implicated in diverse developmental roles such as differentiation, cell-cell recognition, embryogenesis and programmed cell death. This chain is Classical arabinogalactan protein 5 (AGP5), found in Arabidopsis thaliana (Mouse-ear cress).